A 256-amino-acid chain; its full sequence is Membrane-anchored junction protein (256 aa).

Residues 1-232 lie on the Nuclear side of the membrane; that stretch reads MSLKPFTYPF…HSSPPPPKEP (232 aa). Disordered stretches follow at residues 143-197 and 211-235; these read KRKL…TPAS and HGLQGLVVPPLQHSSPPPPKEPGAR. Polar residues predominate over residues 164–173; sequence ETSSEASSNK. Basic and acidic residues predominate over residues 175 to 184; the sequence is PLKESKRSTD. A helical transmembrane segment spans residues 233–251; the sequence is GARGFLGFLSALFPFRYFF. Residues 252–256 lie on the Perinuclear space side of the membrane; sequence KKSGQ.

This sequence belongs to the MAJIN family. In terms of assembly, component of the MAJIN-TERB1-TERB2 complex, composed of MAJIN, TERB1 and TERB2. As to expression, specifically expressed in germline tissues.

It localises to the nucleus inner membrane. The protein resides in the chromosome. The protein localises to the telomere. Its function is as follows. Meiosis-specific telomere-associated protein involved in meiotic telomere attachment to the nucleus inner membrane, a crucial step for homologous pairing and synapsis. Component of the MAJIN-TERB1-TERB2 complex, which promotes telomere cap exchange by mediating attachment of telomeric DNA to the inner nuclear membrane and replacement of the protective cap of telomeric chromosomes: in early meiosis, the MAJIN-TERB1-TERB2 complex associates with telomeric DNA and the shelterin/telosome complex. During prophase, the complex matures and promotes release of the shelterin/telosome complex from telomeric DNA. In the complex, MAJIN acts as the anchoring subunit to the nucleus inner membrane. MAJIN shows DNA-binding activity, possibly for the stabilization of telomere attachment on the nucleus inner membrane. In Mus musculus (Mouse), this protein is Membrane-anchored junction protein.